A 188-amino-acid chain; its full sequence is MDVNIAPLRAWDDFFPGSDRFARPDFRDISKWNNRVVSNLLYYQTNYLVVAAMMISVVGFLSPFNMILGGIVVVLVFTGFVWAAHNKDILRRLKKQYPTVFVMVVMLASYFLISMFGGVMVFVFGITFPLLLMFIHASLRLRNLKNKLENKIEGIGLKRTPMGIVLDALEQQEENISKFADYISKVNE.

An N-acetylmethionine modification is found at Met1. The Cytoplasmic portion of the chain corresponds to 1–35; it reads MDVNIAPLRAWDDFFPGSDRFARPDFRDISKWNNR. The next 2 helical transmembrane spans lie at 36–56 and 57–77; these read VVSN…MMIS and VVGF…VLVF. The Cytoplasmic portion of the chain corresponds to 78–93; sequence TGFVWAAHNKDILRRL. Helical transmembrane passes span 94 to 114 and 115 to 135; these read KKQY…FLIS and MFGG…LMFI. Residues 103-117 form a required for homodimer formation and heterodimer formation with ARL6IP1 region; that stretch reads MVVMLASYFLISMFG. Residues 136-188 lie on the Cytoplasmic side of the membrane; sequence HASLRLRNLKNKLENKIEGIGLKRTPMGIVLDALEQQEENISKFADYISKVNE. A targeting to endoplasmic reticulum membrane region spans residues 136–188; it reads HASLRLRNLKNKLENKIEGIGLKRTPMGIVLDALEQQEENISKFADYISKVNE.

Belongs to the PRA1 family. In terms of assembly, homodimer. Heterodimer with ARL6IP1. Forms multimers. Interacts with ARL6. Interacts with prenylated RAB1A and RAB3A. Interacts with SLC1A1/EAAC1. Interacts with RTN2 (via first transmembrane domain). Does not interact with VAMP1, VAMP2 or VAMP3.

The protein resides in the endoplasmic reticulum membrane. It is found in the cell membrane. It localises to the cytoplasm. Its subcellular location is the cytoskeleton. Its function is as follows. Regulates intracellular concentrations of taurine and glutamate. Negatively modulates SLC1A1/EAAC1 glutamate transport activity by decreasing its affinity for glutamate in a PKC activity-dependent manner. Plays a role in the retention of SLC1A1/EAAC1 in the endoplasmic reticulum. This Sus scrofa (Pig) protein is PRA1 family protein 3 (ARL6IP5).